Consider the following 522-residue polypeptide: Pectinesterase/pectinesterase inhibitor PPE8B (522 aa).

The signal sequence occupies residues 1–30; the sequence is MPYLLMASHNPLPAGKQLLLLVLLCAFFSS. Positions 31-174 are pectinesterase inhibitor PPE8B; that stretch reads SFIPFASCSI…TSLVQELLTQ (144 aa). N-linked (GlcNAc...) asparagine glycosylation is found at N105, N118, N119, N218, N221, and N274. The pectinesterase PPE8B stretch occupies residues 208 to 506; the sequence is DAIVAQDGTG…YTVAQFIEGN (299 aa). Residues T283 and Q313 each coordinate substrate. D336 serves as the catalytic Proton donor; for pectinesterase activity. C350 and C370 are oxidised to a cystine. The active-site Nucleophile; for pectinesterase activity is the D357. N405 is a glycosylation site (N-linked (GlcNAc...) asparagine). The substrate site is built by R426 and W428. Residues N489 and N496 are each glycosylated (N-linked (GlcNAc...) asparagine).

The protein in the N-terminal section; belongs to the PMEI family. In the C-terminal section; belongs to the pectinesterase family.

The protein resides in the secreted. The protein localises to the cell wall. It catalyses the reaction [(1-&gt;4)-alpha-D-galacturonosyl methyl ester](n) + n H2O = [(1-&gt;4)-alpha-D-galacturonosyl](n) + n methanol + n H(+). Its pathway is glycan metabolism; pectin degradation; 2-dehydro-3-deoxy-D-gluconate from pectin: step 1/5. Functionally, may have roles in the deposition of pectin in developing tissues and in the wall loosening and cell separation that occurs in cell expansion, fruit ripening and abscission. The chain is Pectinesterase/pectinesterase inhibitor PPE8B from Prunus persica (Peach).